The primary structure comprises 204 residues: CDP-archaeol synthase (204 aa).

The next 6 membrane-spanning stretches (helical) occupy residues 5–25 (VYAC…YVIL), 43–63 (MLWV…SRLV), 91–111 (FEGF…LAYA), 116–136 (GVSA…GAFV), 147–167 (PAIL…QGLF), and 175–195 (VVVA…MAAF).

The protein belongs to the CDP-archaeol synthase family. Requires Mg(2+) as cofactor.

It is found in the cell membrane. It carries out the reaction 2,3-bis-O-(geranylgeranyl)-sn-glycerol 1-phosphate + CTP + H(+) = CDP-2,3-bis-O-(geranylgeranyl)-sn-glycerol + diphosphate. Its pathway is membrane lipid metabolism; glycerophospholipid metabolism. In terms of biological role, catalyzes the formation of CDP-2,3-bis-(O-geranylgeranyl)-sn-glycerol (CDP-archaeol) from 2,3-bis-(O-geranylgeranyl)-sn-glycerol 1-phosphate (DGGGP) and CTP. This reaction is the third ether-bond-formation step in the biosynthesis of archaeal membrane lipids. This Thermofilum pendens (strain DSM 2475 / Hrk 5) protein is CDP-archaeol synthase.